We begin with the raw amino-acid sequence, 322 residues long: Cyclin mcs2 (322 aa).

Residue Ser-310 is modified to Phosphoserine.

The protein belongs to the cyclin family. Cyclin C subfamily. One of the nine subunits forming the core-TFIIH basal transcription factor. Interacts with crk1 and skp1.

The protein localises to the nucleus. Essential for progression through the cell cycle. Possesses kinase activity that can be detected when myelin basic protein (MBP) is provided as an exogenous substrate. This is Cyclin mcs2 (mcs2) from Schizosaccharomyces pombe (strain 972 / ATCC 24843) (Fission yeast).